Reading from the N-terminus, the 94-residue chain is Serine protease inhibitor Kazal-type 13 (94 aa).

Residues 1 to 23 (MAAFPHKIIFFLVCSTLTHVAFS) form the signal peptide. One can recognise a Kazal-like domain in the interval 33–94 (RWPKPRCKMY…IKFEKYGKCD (62 aa)). 3 disulfides stabilise this stretch: Cys39-Cys75, Cys53-Cys72, and Cys61-Cys93. The N-linked (GlcNAc...) asparagine glycan is linked to Asn55.

Its subcellular location is the secreted. Functionally, may be a serine protease inhibitor. Essential for sperm maturation and fertility. Inhibits sperm acrosome reaction, protecting sperm from premature reaction. This chain is Serine protease inhibitor Kazal-type 13 (SPINK13), found in Homo sapiens (Human).